The following is a 306-amino-acid chain: Agmatinase (306 aa).

Residues His-128, Asp-151, His-153, Asp-155, Asp-232, and Asp-234 each contribute to the Mn(2+) site.

This sequence belongs to the arginase family. Agmatinase subfamily. Requires Mn(2+) as cofactor.

It catalyses the reaction agmatine + H2O = urea + putrescine. The protein operates within amine and polyamine biosynthesis; putrescine biosynthesis via agmatine pathway; putrescine from agmatine: step 1/1. Catalyzes the formation of putrescine from agmatine. This Proteus mirabilis protein is Agmatinase (speB).